The chain runs to 932 residues: MRVPAQATIAVLASAVSSPLNDPQIYDLGKLGWTLSSPALNRTVPGHLPSQVHLDLLRAGVIDDPYHDLNDFNLRWIADANWTYTSDPIRGLGNNTHSTWLVFEGLDTFATIKYCDKQIASTNNQFRQYAFDISEAVKDCTADPVLSLNFGSAPKIVDQIAADPASPQWPFGIQQSYEYPNRWFMRKEQSDFGWDWGPAFAPAGPWKPAYLVQLSSEQNVHVLNTDLDIYRQGQINYLPPDQTQPWVLNASIDFFGSLPSNSSMSIAISETNSGAELTTQSLRNITILNGSITGVAVLKDASPKLWWPYGLGEQNLYNVTITVSDGVRSLARVTKRTGFRTIFLNQRNITDTEIAQGVAPGAHWNFEVNGHEFYAKGSNLIPPDAFWARVTTTKMARLFDSVVAANQNMLRVWSSGAYLPDFMYDLADERGVLLWSEFEFSDAMYPVDKAFLDNVAAEVVYNVRRVNHHPSLALWAGGNEIESLILPTIERSYPDQYAKYVGDYETLYINLILPLVYENTHSITYSPSSTTEGYLDVNLSAKIVMAERYQNLTEGHYYGDTDYYNYDTSVAFDFSQYPVGRFANEFGFHSMPSLQSWQQAVDPEDLHFNSSVIMLRNHHYPAGNLSTHNFHNTSMGMGETTMGVMNYYPVPDKTDPIANFSAWCHATQLFQADFYKSQIQFYRRGSGMPERQLGSLYWQLEDIWQAPSWAGIEYDGRWKVLHYVARDIYQPVIVSPFWNSTTRRLDVYVTSDLWEPVSGTVDLAWMDLSGKPIAQNARTPKTAAFVVGALNTTKIYSMNINERALPDPKNSVLILSVQAEGHLPNSNKKSTLTHQGHFTPVFPKDLMLVDPHLELRYNAKTLTFTVQAKAGVSLYTWLDYPAGVVGYFEDNGFVLVPGQKRDIRFVMQEDKTDGNWVQDVTVRSLWDQTTKT.

Residues 1–19 form the signal peptide; the sequence is MRVPAQATIAVLASAVSSP. Asparagine 41, asparagine 81, asparagine 94, asparagine 249, asparagine 261, asparagine 284, asparagine 289, asparagine 318, and asparagine 348 each carry an N-linked (GlcNAc...) asparagine glycan. Residue glutamate 480 is the Proton donor of the active site. 8 N-linked (GlcNAc...) asparagine glycosylation sites follow: asparagine 538, asparagine 551, asparagine 609, asparagine 624, asparagine 632, asparagine 659, asparagine 739, and asparagine 791.

Belongs to the glycosyl hydrolase 2 family. Beta-mannosidase A subfamily. Homodimer.

The protein localises to the secreted. It carries out the reaction Hydrolysis of terminal, non-reducing beta-D-mannose residues in beta-D-mannosides.. It participates in glycan metabolism; N-glycan degradation. Its function is as follows. Exoglycosidase that cleaves the single beta-linked mannose residue from the non-reducing end of beta-mannosidic oligosaccharides of various complexity and length. Involved in the degradation of polymeric mannan and galactomannan. This is Beta-mannosidase A (mndA) from Aspergillus terreus (strain NIH 2624 / FGSC A1156).